Reading from the N-terminus, the 637-residue chain is Chaperone protein HtpG (637 aa).

Positions 1-347 (MTQSVHAETH…SNDLPLNVSR (347 aa)) are a; substrate-binding. The tract at residues 348 to 564 (EILQDNKVTV…NHGMSTQMIK (217 aa)) is b. A c region spans residues 565-637 (LMRAAGQPVP…SRINRLLLQA (73 aa)).

This sequence belongs to the heat shock protein 90 family. Homodimer.

The protein resides in the cytoplasm. Its function is as follows. Molecular chaperone. Has ATPase activity. The sequence is that of Chaperone protein HtpG from Aeromonas salmonicida (strain A449).